The sequence spans 233 residues: Methyltransferase srdJ (233 aa).

The segment at 1-32 is disordered; sequence MFQVQTAGTRTGTSSPDTTTSEAGLGSTPPMP. Positions 9-21 are enriched in low complexity; that stretch reads TRTGTSSPDTTTS. The S-adenosyl-L-methionine site is built by Trp-40, Trp-52, and Gly-81. Residues 140 to 146 carry the Required for methyltransferase activity motif; it reads EISSQKY.

This sequence belongs to the methyltransferase superfamily.

In terms of biological role, methyltransferase; part of the gene cluster that mediates the biosynthesis of sordarial, a salicylic aldehyde structurally related to the phytotoxin pyriculol. The most interesting aspect of this pathway is formation of an aromatic product from the highly reducing polyketide synthase srdA. SrdA synthesizes a reduced polyketide chain from one molecule of acetyl-CoA and five molecules of malonyl-CoA. The polyketide chain is then reductively released as an aldehyde. The oxidoreductases srdC, srdD and srdE then oxidize one of the hydroxy groups to facilitate the intramolecular aldol condensation, followed by dehydration to yield a salicylic aldehyde. This aldehyde can undergo facile reduction by endogenous reductases to yield the alcohol 1-hydroxy-2-hydroxymethyl-3-pent-1,3-dienylbenzene. The flavin-dependent srdI counteract against the propensity of the aldehydes to be reduced under physiological conditions and is responsible for reoxidizing 1-hydroxy-2-hydroxymethyl-3-pent-1,3-dienylbenzene back to the salicylic aldehyde. This salicylic aldehyde is then selectively epoxidized by the cupin-domain-containing oxidoreductase srdB to yield the epoxide, which can be hydrolyzed stereoselectively by the hydrolase srdG to give the final product sordarial. The polypeptide is Methyltransferase srdJ (Neurospora crassa (strain ATCC 24698 / 74-OR23-1A / CBS 708.71 / DSM 1257 / FGSC 987)).